The sequence spans 435 residues: Tyrosine-protein phosphatase non-receptor type 1 (435 aa).

M1 is subject to N-acetylmethionine. The 275-residue stretch at 3 to 277 (MEKEFEQIDK…RFSYLAVIEG (275 aa)) folds into the Tyrosine-protein phosphatase domain. Position 20 is a phosphotyrosine (Y20). S50 is modified (phosphoserine; by PKB/AKT1, CLK1 and CLK2). Residue Y66 is modified to Phosphotyrosine; by EGFR. Substrate-binding positions include D181 and 215-221 (CSAGIGR). Catalysis depends on C215, which acts as the Phosphocysteine intermediate. The residue at position 215 (C215) is a Cysteine persulfide; alternate. Cysteine sulfenic acid (-SOH); alternate is present on C215. Cysteine sulfinic acid (-SO2H); alternate is present on C215. Residue C215 is modified to S-nitrosocysteine; in reversibly inhibited form. Residues 215-216 (CS) constitute a cross-link (n,N-(cysteine-1,S-diyl)serine (Cys-Ser); in inhibited form). Phosphoserine; by CLK1 and CLK2 occurs at positions 242 and 243. Q262 contributes to the substrate binding site. A compositionally biased stretch (basic and acidic residues) spans 338–351 (TQEDKDCPIKEEKG). The disordered stretch occupies residues 338–359 (TQEDKDCPIKEEKGSPLNAAPY). Phosphoserine occurs at positions 352, 363, and 365. At T368 the chain carries Phosphothreonine. S378 carries the phosphoserine; by PKC modification. Residues 378–398 (SLRGAQAASPAKGEPSLPEKD) are disordered. A Phosphoserine; by CDK1 modification is found at S386.

Belongs to the protein-tyrosine phosphatase family. Non-receptor class 1 subfamily. As to quaternary structure, interacts with EPHA3 (phosphorylated); dephosphorylates EPHA3 and may regulate its trafficking and function. Interacts with MET. Interacts with NCK1. Oxidized on Cys-215; the Cys-SOH formed in response to redox signaling reacts with the alpha-amido of the following residue to form a sulfenamide cross-link, triggering a conformational change that inhibits substrate binding and activity. The active site can be restored by reduction. In terms of processing, ser-50 is the major site of phosphorylation as compared to Ser-242 and Ser-243. Activated by phosphorylation at Ser-50. Post-translationally, S-nitrosylation of Cys-215 inactivates the enzyme activity. Sulfhydration at Cys-215 following endoplasmic reticulum stress inactivates the enzyme activity, promoting EIF2AK3/PERK activity. Expressed in keratinocytes (at protein level).

It is found in the endoplasmic reticulum membrane. It catalyses the reaction O-phospho-L-tyrosyl-[protein] + H2O = L-tyrosyl-[protein] + phosphate. Tyrosine-protein phosphatase which acts as a regulator of endoplasmic reticulum unfolded protein response. Mediates dephosphorylation of EIF2AK3/PERK; inactivating the protein kinase activity of EIF2AK3/PERK. May play an important role in CKII- and p60c-src-induced signal transduction cascades. May regulate the EFNA5-EPHA3 signaling pathway which modulates cell reorganization and cell-cell repulsion. May also regulate the hepatocyte growth factor receptor signaling pathway through dephosphorylation of MET. The chain is Tyrosine-protein phosphatase non-receptor type 1 (PTPN1) from Homo sapiens (Human).